We begin with the raw amino-acid sequence, 634 residues long: Nicotinic receptor-associated protein 1 (634 aa).

C2 domains follow at residues 1 to 141 (MNQP…KAHL) and 159 to 295 (KTGS…EILL). Leu-29, Asp-30, Asp-36, Asp-105, Asp-107, Asp-119, Asp-189, Asp-195, Asp-251, Asp-253, and Asp-271 together coordinate Ca(2+). A VWFA domain is found at 338–557 (DFAVAVDFTA…LDPDVIQENL (220 aa)). The tract at residues 576-603 (RGFQPRPVDDPWRRDSPPPEFDPILDGT) is disordered. The segment covering 582–592 (PVDDPWRRDSP) has biased composition (basic and acidic residues).

This sequence belongs to the copine family. As to quaternary structure, interacts with nicotinic acetylcholine receptor. It depends on Ca(2+) as a cofactor. As to expression, expressed in head and tail neurons, ventral cord moto-neurons, body wall muscles and hypodermal cells of the vulva.

The protein localises to the cell membrane. In terms of biological role, exhibits calcium-dependent phospholipid binding properties. May function in membrane trafficking. Regulates synaptic levels of nicotinic acetylcholine receptor subunit lev-1 and unc-38 in the nerve cord. Involved in nicotinic acetylcholine receptor (nAChR)-mediated sensitivity to nicotine and levamisole. Affects directional sperm motility. This Caenorhabditis elegans protein is Nicotinic receptor-associated protein 1 (nra-1).